The following is a 274-amino-acid chain: tRNA-cytidine(32) 2-sulfurtransferase (274 aa).

A PP-loop motif motif is present at residues S40–S45. 3 residues coordinate [4Fe-4S] cluster: C115, C118, and C206.

The protein belongs to the TtcA family. Homodimer. It depends on Mg(2+) as a cofactor. [4Fe-4S] cluster is required as a cofactor.

The protein resides in the cytoplasm. The enzyme catalyses cytidine(32) in tRNA + S-sulfanyl-L-cysteinyl-[cysteine desulfurase] + AH2 + ATP = 2-thiocytidine(32) in tRNA + L-cysteinyl-[cysteine desulfurase] + A + AMP + diphosphate + H(+). It participates in tRNA modification. Functionally, catalyzes the ATP-dependent 2-thiolation of cytidine in position 32 of tRNA, to form 2-thiocytidine (s(2)C32). The sulfur atoms are provided by the cysteine/cysteine desulfurase (IscS) system. In Pseudomonas putida (strain ATCC 47054 / DSM 6125 / CFBP 8728 / NCIMB 11950 / KT2440), this protein is tRNA-cytidine(32) 2-sulfurtransferase.